The following is a 458-amino-acid chain: MSSGRIVQIIGAVIDVEFPRDGVPSVYNALKVEGAETTLEVQQQLGDGVVRTIAMGSTEGLKRGLNVIDSGAAISVPVGKATLGRIMDVLGNPIDEAGPIGEEERWGIHRDAPSFADQAGGNDLLETGIKVIDLVCPFAKGGKVGLFGGAGVGKTVNMMELIRNIAIEHSGYSVFAGVGERTREGNDFYHEMKDSNVLDKVALVYGQMNEPPGNRLRVALTGLTMAEKFRDEGNDVLLFVDNIYRYTLAGTEVSALLGRMPSAVGYQPTLAEEMGVLQERITSTKEGSITSIQAVYVPADDLTDPSPATTFAHLDATVVLSRDIASLGIYPAVDPLDSTSRQLDPNVIGNEHYETARGVQYVLQRYKELKDIIAILGMDELSESDKQLVSRARKIQRFLSQPFFVAEVFTGSPGKYVSLKDTIAGFSGILKGDYDHLPEQAFYMVGSIEEAVEKAKKL.

ATP is bound at residue 148–155 (GGAGVGKT).

This sequence belongs to the ATPase alpha/beta chains family. As to quaternary structure, F-type ATPases have 2 components, CF(1) - the catalytic core - and CF(0) - the membrane proton channel. CF(1) has five subunits: alpha(3), beta(3), gamma(1), delta(1), epsilon(1). CF(0) has three main subunits: a(1), b(2) and c(9-12). The alpha and beta chains form an alternating ring which encloses part of the gamma chain. CF(1) is attached to CF(0) by a central stalk formed by the gamma and epsilon chains, while a peripheral stalk is formed by the delta and b chains.

The protein resides in the cell inner membrane. It carries out the reaction ATP + H2O + 4 H(+)(in) = ADP + phosphate + 5 H(+)(out). Its function is as follows. Produces ATP from ADP in the presence of a proton gradient across the membrane. The catalytic sites are hosted primarily by the beta subunits. The polypeptide is ATP synthase subunit beta (Pseudomonas putida (strain W619)).